The primary structure comprises 146 residues: Globin-1 (146 aa).

Residues 9–146 (QLTADVKKDL…KLVAVVQAAL (138 aa)) enclose the Globin domain. Histidine 101 serves as a coordination point for heme b.

Belongs to the globin family. In terms of assembly, homodimer.

It localises to the cytoplasm. The sequence is that of Globin-1 from Anadara inaequivalvis (Inequivalve ark).